Reading from the N-terminus, the 302-residue chain is Homoserine O-acetyltransferase (302 aa).

Cys142 serves as the catalytic Acyl-thioester intermediate. Positions 163 and 192 each coordinate substrate. His235 serves as the catalytic Proton acceptor. Glu237 is a catalytic residue. Arg249 serves as a coordination point for substrate.

This sequence belongs to the MetA family.

The protein localises to the cytoplasm. It catalyses the reaction L-homoserine + acetyl-CoA = O-acetyl-L-homoserine + CoA. It participates in amino-acid biosynthesis; L-methionine biosynthesis via de novo pathway; O-acetyl-L-homoserine from L-homoserine: step 1/1. Its function is as follows. Transfers an acetyl group from acetyl-CoA to L-homoserine, forming acetyl-L-homoserine. This chain is Homoserine O-acetyltransferase, found in Bacillus licheniformis (strain ATCC 14580 / DSM 13 / JCM 2505 / CCUG 7422 / NBRC 12200 / NCIMB 9375 / NCTC 10341 / NRRL NRS-1264 / Gibson 46).